Here is a 275-residue protein sequence, read N- to C-terminus: Structure-specific endonuclease subunit SLX1 (275 aa).

The GIY-YIG domain maps to 12-95; that stretch reads RFFGVYLLYC…QHPHASRRLA (84 aa). The span at 148–161 shows a compositional bias: pro residues; sequence HVPLAFGPPPPQAP. The tract at residues 148 to 179 is disordered; sequence HVPLAFGPPPPQAPAPRRRAGPFDDAEPEPDQ. An SLX1-type zinc finger spans residues 186–238; the sequence is CSLCAQTIQDEEGPLCCPHPGCLLRAHVICLAEEFLQEEPGQLLPLEGQCPCC.

This sequence belongs to the SLX1 family. As to quaternary structure, forms a heterodimer with SLX4. A divalent metal cation is required as a cofactor.

It is found in the nucleus. In terms of biological role, catalytic subunit of the SLX1-SLX4 structure-specific endonuclease that resolves DNA secondary structures generated during DNA repair and recombination. Has endonuclease activity towards branched DNA substrates, introducing single-strand cuts in duplex DNA close to junctions with ss-DNA. Has a preference for 5'-flap structures, and promotes symmetrical cleavage of static and migrating Holliday junctions (HJs). Resolves HJs by generating two pairs of ligatable, nicked duplex products. The chain is Structure-specific endonuclease subunit SLX1 from Homo sapiens (Human).